Reading from the N-terminus, the 284-residue chain is Probable ADP-ribose 1''-phosphate phosphatase YML087W (284 aa).

Residues Asp23, Gln55, Asn80, and Asp90 each contribute to the substrate site. The Macro domain occupies Glu34–Leu230. Active-site residues include Asn80 and Asp90. The cysteines at positions 128 and 136 are disulfide-linked. Residue His145 is part of the active site. Residues Thr148 and Thr195 each coordinate substrate.

As to quaternary structure, homodimer.

It carries out the reaction ADP-alpha-D-ribose 1''-phosphate + H2O = ADP-D-ribose + phosphate. Functionally, highly specific phosphatase involved in the metabolism of ADP-ribose 1''-phosphate (Appr1p) which is produced as a consequence of tRNA splicing. + phosphate. This Saccharomyces cerevisiae (strain ATCC 204508 / S288c) (Baker's yeast) protein is Probable ADP-ribose 1''-phosphate phosphatase YML087W.